The chain runs to 353 residues: Probable D-xylulose reductase A (353 aa).

Zn(2+) contacts are provided by cysteine 42, histidine 67, and glutamate 68. 177–182 (GAGPVG) contributes to the NAD(+) binding site.

The protein belongs to the zinc-containing alcohol dehydrogenase family. It depends on Zn(2+) as a cofactor.

The catalysed reaction is xylitol + NAD(+) = D-xylulose + NADH + H(+). Its pathway is carbohydrate degradation; L-arabinose degradation via L-arabinitol; D-xylulose 5-phosphate from L-arabinose (fungal route): step 4/5. In terms of biological role, xylitol dehydrogenase which catalyzes the conversion of xylitol to D-xylulose. Xylose is a major component of hemicelluloses such as xylan. Most fungi utilize D-xylose via three enzymatic reactions, xylose reductase (XR), xylitol dehydrogenase (XDH), and xylulokinase, to form xylulose 5-phosphate, which enters pentose phosphate pathway. The polypeptide is Probable D-xylulose reductase A (xdhA) (Aspergillus terreus (strain NIH 2624 / FGSC A1156)).